Here is a 95-residue protein sequence, read N- to C-terminus: Large ribosomal subunit protein bL25 (95 aa).

This sequence belongs to the bacterial ribosomal protein bL25 family. As to quaternary structure, part of the 50S ribosomal subunit; part of the 5S rRNA/L5/L18/L25 subcomplex. Contacts the 5S rRNA. Binds to the 5S rRNA independently of L5 and L18.

This is one of the proteins that binds to the 5S RNA in the ribosome where it forms part of the central protuberance. The sequence is that of Large ribosomal subunit protein bL25 from Chromobacterium violaceum (strain ATCC 12472 / DSM 30191 / JCM 1249 / CCUG 213 / NBRC 12614 / NCIMB 9131 / NCTC 9757 / MK).